A 640-amino-acid polypeptide reads, in one-letter code: Chaperone protein DnaK (640 aa).

A Phosphothreonine; by autocatalysis modification is found at T198. The disordered stretch occupies residues 600–640; sequence KTQGAGAEGSEQPHGEQEAGGAAKGETVVDADFEEVKDDKK. Residues 628 to 640 are compositionally biased toward acidic residues; sequence VDADFEEVKDDKK.

The protein belongs to the heat shock protein 70 family.

In terms of biological role, acts as a chaperone. In Geobacter sp. (strain M21), this protein is Chaperone protein DnaK.